The sequence spans 209 residues: 60S ribosomal subunit assembly/export protein loc-1 (209 aa).

Disordered regions lie at residues 1-53 (MAPT…SKGR) and 135-209 (REAR…AAPE). Composition is skewed to basic and acidic residues over residues 20–33 (GSKD…DGVL) and 135–159 (REAR…TKDS). Residues 126 to 170 (IKARQMEEIREARRAEAEKKEAERKARLEETKDSLRKKRKRSKQS) adopt a coiled-coil conformation.

Belongs to the LOC1 family. As to quaternary structure, component of the 66S pre-ribosomal particle.

The protein localises to the nucleus. It localises to the nucleolus. Its function is as follows. Required for efficient assembly and nuclear export of the 60S ribosomal subunit. The chain is 60S ribosomal subunit assembly/export protein loc-1 (loc-1) from Neurospora crassa (strain ATCC 24698 / 74-OR23-1A / CBS 708.71 / DSM 1257 / FGSC 987).